The primary structure comprises 78 residues: Glycophorin-E (78 aa).

The signal sequence occupies residues 1–19 (MYGKIIFVLLLSGIVSISA). Residues 20–52 (SSTTGVAMHTSTSSSVTKSYISSQTNGITLINW) are Extracellular-facing. A helical membrane pass occupies residues 53–73 (WAMARVIFEVMLVVVGMIILI). Topologically, residues 74-78 (SYCIR) are cytoplasmic.

Belongs to the glycophorin-A family. The N-terminal extracellular domain is heavily glycosylated on serine and threonine residues. Erythrocytes.

Its subcellular location is the membrane. Its function is as follows. This protein is a minor sialoglycoprotein in human erythrocyte membranes. This is Glycophorin-E (GYPE) from Homo sapiens (Human).